A 373-amino-acid chain; its full sequence is Queuine tRNA-ribosyltransferase (373 aa).

Asp-90 functions as the Proton acceptor in the catalytic mechanism. Substrate contacts are provided by residues 90–94, Asp-144, Gln-193, and Gly-220; that span reads DSGGF. The RNA binding stretch occupies residues 251 to 257; sequence GVGTPED. The active-site Nucleophile is the Asp-270. An RNA binding; important for wobble base 34 recognition region spans residues 275 to 279; sequence TRNAR. Cys-308, Cys-310, Cys-313, and His-339 together coordinate Zn(2+).

This sequence belongs to the queuine tRNA-ribosyltransferase family. Homodimer. Within each dimer, one monomer is responsible for RNA recognition and catalysis, while the other monomer binds to the replacement base PreQ1. Zn(2+) serves as cofactor.

It carries out the reaction 7-aminomethyl-7-carbaguanine + guanosine(34) in tRNA = 7-aminomethyl-7-carbaguanosine(34) in tRNA + guanine. It participates in tRNA modification; tRNA-queuosine biosynthesis. Functionally, catalyzes the base-exchange of a guanine (G) residue with the queuine precursor 7-aminomethyl-7-deazaguanine (PreQ1) at position 34 (anticodon wobble position) in tRNAs with GU(N) anticodons (tRNA-Asp, -Asn, -His and -Tyr). Catalysis occurs through a double-displacement mechanism. The nucleophile active site attacks the C1' of nucleotide 34 to detach the guanine base from the RNA, forming a covalent enzyme-RNA intermediate. The proton acceptor active site deprotonates the incoming PreQ1, allowing a nucleophilic attack on the C1' of the ribose to form the product. After dissociation, two additional enzymatic reactions on the tRNA convert PreQ1 to queuine (Q), resulting in the hypermodified nucleoside queuosine (7-(((4,5-cis-dihydroxy-2-cyclopenten-1-yl)amino)methyl)-7-deazaguanosine). This Campylobacter jejuni subsp. jejuni serotype O:6 (strain 81116 / NCTC 11828) protein is Queuine tRNA-ribosyltransferase.